We begin with the raw amino-acid sequence, 365 residues long: Histidinol-phosphate aminotransferase 2 (365 aa).

Residue lysine 222 is modified to N6-(pyridoxal phosphate)lysine.

Belongs to the class-II pyridoxal-phosphate-dependent aminotransferase family. Histidinol-phosphate aminotransferase subfamily. In terms of assembly, homodimer. The cofactor is pyridoxal 5'-phosphate.

The enzyme catalyses L-histidinol phosphate + 2-oxoglutarate = 3-(imidazol-4-yl)-2-oxopropyl phosphate + L-glutamate. Its pathway is amino-acid biosynthesis; L-histidine biosynthesis; L-histidine from 5-phospho-alpha-D-ribose 1-diphosphate: step 7/9. This chain is Histidinol-phosphate aminotransferase 2 (hisC2), found in Bordetella parapertussis (strain 12822 / ATCC BAA-587 / NCTC 13253).